The primary structure comprises 357 residues: Putative DENN domain-containing protein 10 B (357 aa).

The uDENN domain occupies 1–140 (MAAAELADTQ…TKGICQSEEN (140 aa)). The region spanning 159-299 (IKDIVSQFGM…PEKSESQVIQ (141 aa)) is the cDENN domain. The 57-residue stretch at 301–357 (IALKTREIFTNLAPFSEVSADGEKRVLNLEALKQKRFPPATENFLYHLAAAEQMLKI) folds into the dDENN domain.

It belongs to the DENND10 family.

The protein resides in the late endosome. Its function is as follows. May be a guanine nucleotide exchange factor (GEF). This is Putative DENN domain-containing protein 10 B from Homo sapiens (Human).